Consider the following 248-residue polypeptide: 7-cyano-7-deazaguanine synthase (248 aa).

An ATP-binding site is contributed by 22–32 (LSGGLDSTTCL). 4 residues coordinate Zn(2+): C216, C225, C228, and C231.

It belongs to the QueC family. Requires Zn(2+) as cofactor.

The enzyme catalyses 7-carboxy-7-deazaguanine + NH4(+) + ATP = 7-cyano-7-deazaguanine + ADP + phosphate + H2O + H(+). Its pathway is purine metabolism; 7-cyano-7-deazaguanine biosynthesis. In terms of biological role, catalyzes the ATP-dependent conversion of 7-carboxy-7-deazaguanine (CDG) to 7-cyano-7-deazaguanine (preQ(0)). The chain is 7-cyano-7-deazaguanine synthase from Leptospira biflexa serovar Patoc (strain Patoc 1 / Ames).